The primary structure comprises 194 residues: MAAQPVIKVAGLCGSLRKGSYNRGLLNAAMEICKDSITGMEIEYVDISPLPFLNTDLEVNGTYPPVVEAFRKKIEEADCFLFASPEYNYSITGPLKNAIDWASRPPNVWADKAAAMVSAGGGFGGGRSQYHLRQIGVFLDLHFINKPEFFLNAFQQPPKFDSDGVLTDEETKQRLRAVLLALQALALKLKGKCE.

Belongs to the SsuE family. As to quaternary structure, homotetramer. It depends on FMN as a cofactor.

It catalyses the reaction a quinone + NADH + H(+) = a quinol + NAD(+). The catalysed reaction is a quinone + NADPH + H(+) = a quinol + NADP(+). Its function is as follows. The enzyme apparently serves as a quinone reductase in connection with conjugation reactions of hydroquinones involved in detoxification pathways. The chain is NAD(P)H:quinone oxidoreductase from Solanum tuberosum (Potato).